The following is a 389-amino-acid chain: MKSAALLLPLYTAAFAAAAFHHEHAQAVIQDQQLTIVEPDEYLIELSPGETRWVNENEKWELRKKNINFFDITHNAELGTLNHRINAESVKYPSKPVFNETLAPLLKELDKNNMRAHLETFTSFHTRYYKSQYGVQSSAWLLGQVNKTLADAGAINASVKAFPHPWGQSSIIATIPGKSDKTIVIGAHQDSINLFFPAFLAAPGADDDGSGTVTILEALRVLLKSDEILKGEAENTIEFHWYSAEEGGLLGSQAIFQSYEKEARDVKAMLQQDMTGYVQKTLDAGEPESVGVITDFVDPGLTEFIKKIITVYCDIPYVLTKCGYACSDHASASKAGYPSAFVIESDFKYSDKKIHTTEDKIEYLSFDHMLQHARMTLALAYELAFAEFK.

Residues 1–18 (MKSAALLLPLYTAAFAAA) form the signal peptide. A propeptide spanning residues 19–89 (AFHHEHAQAV…TLNHRINAES (71 aa)) is cleaved from the precursor. Residues Asn99, Asn146, and Asn156 are each glycosylated (N-linked (GlcNAc...) asparagine). 4 residues coordinate Zn(2+): His188, Asp207, Glu246, and Asp273. Cysteines 322 and 326 form a disulfide. Residue His355 participates in Zn(2+) binding.

Belongs to the peptidase M28 family. M28E subfamily. As to quaternary structure, monomer. It depends on Zn(2+) as a cofactor.

Its subcellular location is the secreted. In terms of biological role, extracellular aminopeptidase that allows assimilation of proteinaceous substrates. The protein is Leucine aminopeptidase 1 (lap1) of Pyrenophora tritici-repentis (strain Pt-1C-BFP) (Wheat tan spot fungus).